Consider the following 108-residue polypeptide: Large ribosomal subunit protein uL24 (108 aa).

Belongs to the universal ribosomal protein uL24 family. Part of the 50S ribosomal subunit.

Functionally, one of two assembly initiator proteins, it binds directly to the 5'-end of the 23S rRNA, where it nucleates assembly of the 50S subunit. In terms of biological role, one of the proteins that surrounds the polypeptide exit tunnel on the outside of the subunit. The chain is Large ribosomal subunit protein uL24 from Mycoplasma mycoides subsp. mycoides SC (strain CCUG 32753 / NCTC 10114 / PG1).